The primary structure comprises 40 residues: Photosystem II reaction center protein J (40 aa).

The chain crosses the membrane as a helical span at residues 8-28 (IPLWLIGTVAGIPVIGSVGVF).

The protein belongs to the PsbJ family. In terms of assembly, PSII is composed of 1 copy each of membrane proteins PsbA, PsbB, PsbC, PsbD, PsbE, PsbF, PsbH, PsbI, PsbJ, PsbK, PsbL, PsbM, PsbT, PsbX, PsbY, PsbZ, Psb30/Ycf12, at least 3 peripheral proteins of the oxygen-evolving complex and a large number of cofactors. It forms dimeric complexes.

The protein localises to the plastid. Its subcellular location is the chloroplast thylakoid membrane. Its function is as follows. One of the components of the core complex of photosystem II (PSII). PSII is a light-driven water:plastoquinone oxidoreductase that uses light energy to abstract electrons from H(2)O, generating O(2) and a proton gradient subsequently used for ATP formation. It consists of a core antenna complex that captures photons, and an electron transfer chain that converts photonic excitation into a charge separation. This is Photosystem II reaction center protein J from Acorus calamus (Sweet flag).